The chain runs to 357 residues: CCN family member 3 (357 aa).

The first 31 residues, 1 to 31, serve as a signal peptide directing secretion; the sequence is MQSVQSTSFCLRKQCLCLTFLLLHLLGQVAA. The IGFBP N-terminal domain occupies 32 to 105; sequence TQRCPPQCPG…SNQTGICTAV (74 aa). Intrachain disulfides connect Cys35-Cys61, Cys39-Cys63, Cys43-Cys64, Cys50-Cys67, Cys75-Cys89, and Cys81-Cys102. An N-linked (GlcNAc...) asparagine glycan is attached at Asn97. Positions 108 to 174 constitute a VWFC domain; it reads DNCVFDGVIY…GECCEKWICG (67 aa). Residues 205-250 enclose the TSP type-1 domain; sequence NCIEQTTEWTACSKSCGMGFSTRVTNRNRQCEMLKQTRLCMVRPCE. The S-palmitoyl cysteine moiety is linked to residue Cys244. 5 disulfide bridges follow: Cys264-Cys301, Cys281-Cys315, Cys292-Cys331, Cys295-Cys333, and Cys300-Cys337. In terms of domain architecture, CTCK spans 264–338; the sequence is CLRTKKSLKA…GTCTCHTNCP (75 aa). Asn280 carries N-linked (GlcNAc...) asparagine glycosylation.

The protein belongs to the CCN family. In terms of assembly, interacts with FBLN1. Interacts (via CTCK domain) with NOTCH1 (via the EGF-like repeat region). Interacts with GJA1/CX43. Interacts with ITGA5:ITGB1, ITGAV:ITGB3 and ITGAV:ITGB5. Interacts with ZDHHC22; the interaction may lead to CCN3 palmitoylation. In terms of processing, may be palmitoylated on Cys-244, which is important for extracellular secretion. As to expression, expressed in endothelial cells (at protein level). Expressed in bone marrow and thymic cells.

The protein resides in the secreted. Its subcellular location is the cytoplasm. It localises to the cell junction. It is found in the gap junction. Functionally, immediate-early protein playing a role in various cellular processes including proliferation, adhesion, migration, differentiation and survival. Acts by binding to integrins or membrane receptors such as NOTCH1. Essential regulator of hematopoietic stem and progenitor cell function. Inhibits myogenic differentiation through the activation of Notch-signaling pathway. Inhibits vascular smooth muscle cells proliferation by increasing expression of cell-cycle regulators such as CDKN2B or CDKN1A independently of TGFB1 signaling. Ligand of integrins ITGAV:ITGB3 and ITGA5:ITGB1, acts directly upon endothelial cells to stimulate pro-angiogenic activities and induces angiogenesis. In endothelial cells, supports cell adhesion, induces directed cell migration (chemotaxis) and promotes cell survival. Also plays a role in cutaneous wound healing acting as integrin receptor ligand. Supports skin fibroblast adhesion through ITGA5:ITGB1 and ITGA6:ITGB1 and induces fibroblast chemotaxis through ITGAV:ITGB5. Seems to enhance bFGF-induced DNA synthesis in fibroblasts. Involved in bone regeneration as a negative regulator. Enhances the articular chondrocytic phenotype, whereas it repressed the one representing endochondral ossification. Impairs pancreatic beta-cell function, inhibits beta-cell proliferation and insulin secretion. Plays a role as negative regulator of endothelial pro-inflammatory activation reducing monocyte adhesion, its anti-inflammatory effects occur secondary to the inhibition of NF-kappaB signaling pathway. Contributes to the control and coordination of inflammatory processes in atherosclerosis. Attenuates inflammatory pain through regulation of IL1B- and TNF-induced MMP9, MMP2 and CCL2 expression. Inhibits MMP9 expression through ITGB1 engagement. Brain osteoanabolic hormone. Drives osteogenesis in osteochondral skeletal stem cells. During lactation, maintains the maternal skeleton and viability of offspring. This chain is CCN family member 3, found in Homo sapiens (Human).